Here is a 332-residue protein sequence, read N- to C-terminus: Transaldolase (332 aa).

Lys-136 acts as the Schiff-base intermediate with substrate in catalysis.

The protein belongs to the transaldolase family. Type 1 subfamily.

The protein localises to the cytoplasm. The enzyme catalyses D-sedoheptulose 7-phosphate + D-glyceraldehyde 3-phosphate = D-erythrose 4-phosphate + beta-D-fructose 6-phosphate. The protein operates within carbohydrate degradation; pentose phosphate pathway; D-glyceraldehyde 3-phosphate and beta-D-fructose 6-phosphate from D-ribose 5-phosphate and D-xylulose 5-phosphate (non-oxidative stage): step 2/3. In terms of biological role, transaldolase is important for the balance of metabolites in the pentose-phosphate pathway. The sequence is that of Transaldolase from Nostoc sp. (strain PCC 7120 / SAG 25.82 / UTEX 2576).